Reading from the N-terminus, the 279-residue chain is Rhamnulose-1-phosphate aldolase (279 aa).

Glutamate 115 is a catalytic residue. Residues histidine 138, histidine 140, and histidine 209 each contribute to the Zn(2+) site.

Belongs to the aldolase class II family. RhaD subfamily. Zn(2+) is required as a cofactor.

It localises to the cytoplasm. The enzyme catalyses L-rhamnulose 1-phosphate = (S)-lactaldehyde + dihydroxyacetone phosphate. It functions in the pathway carbohydrate degradation; L-rhamnose degradation; glycerone phosphate from L-rhamnose: step 3/3. Its function is as follows. Catalyzes the reversible cleavage of L-rhamnulose-1-phosphate to dihydroxyacetone phosphate (DHAP) and L-lactaldehyde. This Enterococcus faecalis (strain ATCC 700802 / V583) protein is Rhamnulose-1-phosphate aldolase.